Reading from the N-terminus, the 342-residue chain is Heparan sulfate glucosamine 3-O-sulfotransferase 6 (342 aa).

The Cytoplasmic portion of the chain corresponds to 1-31 (MAGSGGLGGGAGDLQGAGTGQGTALRALRAP). Residues 32 to 49 (LALVVLLLSAYCLFALPG) form a helical; Signal-anchor for type II membrane protein membrane-spanning segment. Residues 50 to 342 (RCPPAARAPA…QMTGQDFGWD (293 aa)) are Lumenal-facing. The disordered stretch occupies residues 56-75 (RAPAPVPAPAEPPHTSLRLR). Residue 100-104 (KGGTR) coordinates 3'-phosphoadenylyl sulfate. Residues 122 to 128 (EPHFFDR) and 153 to 156 (KTPS) each bind substrate. Arg-181 and Ser-189 together coordinate 3'-phosphoadenylyl sulfate. 220 to 221 (WS) contributes to the substrate binding site. N-linked (GlcNAc...) asparagine glycosylation occurs at Asn-281. Cys-288 and Cys-300 are joined by a disulfide. 305–309 (KGRPH) contributes to the 3'-phosphoadenylyl sulfate binding site.

It belongs to the sulfotransferase 1 family. In terms of tissue distribution, expressed in liver and kidney, followed by heart, brain, lung and testis.

The protein resides in the golgi apparatus membrane. The catalysed reaction is alpha-D-glucosaminyl-[heparan sulfate](n) + 3'-phosphoadenylyl sulfate = 3-sulfo-alpha-D-glucosaminyl-[heparan sulfate](n) + adenosine 3',5'-bisphosphate + H(+). In terms of biological role, sulfotransferase that utilizes 3'-phospho-5'-adenylyl sulfate (PAPS) to catalyze the transfer of a sulfo group to heparan sulfate. Unlike 3-OST-1, does not convert non-anticoagulant heparan sulfate to anticoagulant heparan sulfate. In Mus musculus (Mouse), this protein is Heparan sulfate glucosamine 3-O-sulfotransferase 6 (Hs3st6).